Consider the following 441-residue polypeptide: Coiled-coil domain-containing protein 91 (441 aa).

The segment at 1 to 16 (MDDDDFGGFEAAETFD) is GGA1-binding motif. The interval 1–26 (MDDDDFGGFEAAETFDGGSGETQTTS) is disordered. Phosphoserine occurs at positions 43 and 46. Coiled coils occupy residues 130-209 (SNIQ…GHEA) and 249-407 (ELLN…KRLD). A homodimerization region spans residues 210–413 (LSIIVDEYKA…KRLDQVIRQR (204 aa)).

As to quaternary structure, homodimer. Interacts with GGA1, GGA2 and AP1G1. Widely expressed.

It is found in the membrane. It localises to the golgi apparatus. The protein resides in the trans-Golgi network membrane. The protein localises to the trans-Golgi network. Its function is as follows. Involved in the regulation of membrane traffic through the trans-Golgi network (TGN). Functions in close cooperation with the GGAs in the sorting of hydrolases to lysosomes. The protein is Coiled-coil domain-containing protein 91 (CCDC91) of Homo sapiens (Human).